Consider the following 948-residue polypeptide: Bifunctional glutamine synthetase adenylyltransferase/adenylyl-removing enzyme (948 aa).

An adenylyl removase region spans residues 1-447 (MLTPDNKLMS…EFQQVVGAES (447 aa)). Residues 453–948 (EQGLQVLWQD…NCWNHLLEDD (496 aa)) are adenylyl transferase.

This sequence belongs to the GlnE family. Mg(2+) serves as cofactor.

It carries out the reaction [glutamine synthetase]-O(4)-(5'-adenylyl)-L-tyrosine + phosphate = [glutamine synthetase]-L-tyrosine + ADP. The catalysed reaction is [glutamine synthetase]-L-tyrosine + ATP = [glutamine synthetase]-O(4)-(5'-adenylyl)-L-tyrosine + diphosphate. Involved in the regulation of glutamine synthetase GlnA, a key enzyme in the process to assimilate ammonia. When cellular nitrogen levels are high, the C-terminal adenylyl transferase (AT) inactivates GlnA by covalent transfer of an adenylyl group from ATP to specific tyrosine residue of GlnA, thus reducing its activity. Conversely, when nitrogen levels are low, the N-terminal adenylyl removase (AR) activates GlnA by removing the adenylyl group by phosphorolysis, increasing its activity. The regulatory region of GlnE binds the signal transduction protein PII (GlnB) which indicates the nitrogen status of the cell. This is Bifunctional glutamine synthetase adenylyltransferase/adenylyl-removing enzyme from Idiomarina loihiensis (strain ATCC BAA-735 / DSM 15497 / L2-TR).